The chain runs to 471 residues: UDP-N-acetylmuramate--L-alanine ligase (471 aa).

Residue 114–120 (GTHGKTT) participates in ATP binding.

The protein belongs to the MurCDEF family.

It localises to the cytoplasm. The enzyme catalyses UDP-N-acetyl-alpha-D-muramate + L-alanine + ATP = UDP-N-acetyl-alpha-D-muramoyl-L-alanine + ADP + phosphate + H(+). It participates in cell wall biogenesis; peptidoglycan biosynthesis. Cell wall formation. The sequence is that of UDP-N-acetylmuramate--L-alanine ligase from Brucella abortus (strain S19).